Consider the following 339-residue polypeptide: MSTVHEILCKLSLEGDHSTPPSAYGSVKAYTNFDAERDALNIETAIKTKGVDEVTIVNILTNRSNEQRQDIAFAYQRRTKKELASALKSALSGHLETVILGLLKTPAQYDASELKASMKGLGTDEDSLIEIICSRTNQELQEINRVYKEMYKTDLEKDIVSDTSGDFRKLMVALAKGRRAEDGSVIDYELIDQDARDLYDAGVKXKXTDVPKWISIMTERSVCHLQKVFERYKSYSPYDMLESIKKEVKGDLENAFLNLVQCIQNKPLYFADRLYDSMKGKGTRDKVLIRIMVSRSEVDMLKIRSEFKKKYGKSLYYYIQQDTKGDYQKALLYLCGGDD.

N-acetylserine is present on S2. The tract at residues 2–24 (STVHEILCKLSLEGDHSTPPSAY) is S100A10-binding site. Position 24 is a phosphotyrosine; by SRC (Y24). S26 is subject to Phosphoserine; by PKC. Annexin repeat units lie at residues 33–104 (FDAE…GLLK) and 105–176 (TPAQ…ALAK). K49 bears the N6-acetyllysine; alternate mark. A Glycyl lysine isopeptide (Lys-Gly) (interchain with G-Cter in SUMO1); alternate cross-link involves residue K49. A Glycyl lysine isopeptide (Lys-Gly) (interchain with G-Cter in SUMO2); alternate cross-link involves residue K49. Residue K152 is modified to N6-acetyllysine. S184 carries the phosphoserine modification. Annexin repeat units follow at residues 189 to 261 (ELID…NLVQ) and 265 to 336 (NKPL…YLCG). Residue Y199 is modified to Phosphotyrosine. K227 is modified (N6-acetyllysine).

This sequence belongs to the annexin family. In terms of assembly, heterotetramer containing 2 light chains of S100A10/p11 and 2 heavy chains of ANXA2/p36. Interacts with ATP1B1. Interacts with DYSF. Interacts with COCH. Interacts (via repeat Annexin 1) with PCSK9 (via the C-terminal domain); the interaction inhibits the degradation of LDLR. Interacts with CEACAM1 (via the cytoplasmic domain); this interaction is regulated by phosphorylation of CEACAM1. Interacts with APPL2 and APPL1; targets APPL2 to endosomes and acting in parallel to RAB5A. Interacts with S100A4. May interact with UBAP2. Post-translationally, ISGylated. As to expression, expressed strongly in velvet antler reserve mesenchyme.

It localises to the secreted. The protein resides in the extracellular space. It is found in the extracellular matrix. Its subcellular location is the basement membrane. Its function is as follows. Calcium-regulated membrane-binding protein whose affinity for calcium is greatly enhanced by anionic phospholipids. It binds two calcium ions with high affinity. May be involved in heat-stress response. Inhibits PCSK9-enhanced LDLR degradation, probably reduces PCSK9 protein levels via a translational mechanism but also competes with LDLR for binding with PCSK9. Binds to endosomes damaged by phagocytosis of particulate wear debris and participates in endosomal membrane stabilization, thereby limiting NLRP3 inflammasome activation. Required for endothelial cell surface plasmin generation and may support fibrinolytic surveillance and neoangiogenesis. The protein is Annexin A2 (ANXA2) of Cervus elaphus (Red deer).